The primary structure comprises 253 residues: MDYXNFGNSASKKFQDDTLNRVRKEHEEALKKLREENFSSNTSELGNKKHYRAQERMSSPLHRLSPTGKSDDRKVKSPLDDKLRRQLREGNTRLPPPPFSSYGMPPTNRSNLDRIRRRTSSPVRTDKFASQNVIDDQRLEIKYLERIVYDQGTVIDNLTSRITRLESFILNSISDRGDKNFASLEHSRSFSGFPTNKTYGLQMGGLYENDMPYRRSSDNINKEGAREDRSSQIHIENESTEDILKILSSSFHN.

Residues 1–12 (MDYXNFGNSASK) are compositionally biased toward polar residues. 3 disordered regions span residues 1 to 20 (MDYXNFGNSASKKFQDDTLN), 31 to 123 (KKLR…SSPV), and 210 to 231 (DMPYRRSSDNINKEGAREDRSS). Residue T18 is modified to Phosphothreonine. At S65 the chain carries Phosphoserine. Composition is skewed to basic and acidic residues over residues 69–91 (KSDDRKVKSPLDDKLRRQLREGN) and 211–231 (MPYRRSSDNINKEGAREDRSS). A Phosphothreonine; by MPS1 modification is found at T240.

It belongs to the SPC29 family. In terms of assembly, component of the SPC110 complex containing at least CMD1, SPC29, SPC42 and SCP110. Interacts with BBP1. Post-translationally, MPS1-mediated phosphorylation at Thr-240 is required for spindle pole body duplication.

It is found in the nucleus. The protein resides in the cytoplasm. The protein localises to the cytoskeleton. It localises to the microtubule organizing center. Its subcellular location is the spindle pole body. Functionally, component of the spindle pole body (SPB) required for the proper execution of spindle pole body (SPB) duplication. Links the central plaque component SPC42 to the inner plaque component SPC110. This Saccharomyces cerevisiae (strain Zymaflore VL3) (Baker's yeast) protein is Spindle pole component 29 (SPC29).